We begin with the raw amino-acid sequence, 325 residues long: GMP reductase (325 aa).

Cys-173 functions as the Thioimidate intermediate in the catalytic mechanism. 202-225 provides a ligand contact to NADP(+); that stretch reads IIADGGIRHHGDIAKSVRFGAAMV.

This sequence belongs to the IMPDH/GMPR family. GuaC type 2 subfamily.

It carries out the reaction IMP + NH4(+) + NADP(+) = GMP + NADPH + 2 H(+). Its function is as follows. Catalyzes the irreversible NADPH-dependent deamination of GMP to IMP. It functions in the conversion of nucleobase, nucleoside and nucleotide derivatives of G to A nucleotides, and in maintaining the intracellular balance of A and G nucleotides. This Leptothrix cholodnii (strain ATCC 51168 / LMG 8142 / SP-6) (Leptothrix discophora (strain SP-6)) protein is GMP reductase.